Reading from the N-terminus, the 640-residue chain is Threonine--tRNA ligase (640 aa).

Residues 1–61 form the TGS domain; it reads MPTITLPDGS…THDATLQIIT (61 aa). Residues 242 to 533 form a catalytic region; sequence DHRKIGKQLD…LIEHYAGVFP (292 aa). The Zn(2+) site is built by Cys333, His384, and His510.

Belongs to the class-II aminoacyl-tRNA synthetase family. In terms of assembly, homodimer. It depends on Zn(2+) as a cofactor.

The protein localises to the cytoplasm. It catalyses the reaction tRNA(Thr) + L-threonine + ATP = L-threonyl-tRNA(Thr) + AMP + diphosphate + H(+). Functionally, catalyzes the attachment of threonine to tRNA(Thr) in a two-step reaction: L-threonine is first activated by ATP to form Thr-AMP and then transferred to the acceptor end of tRNA(Thr). Also edits incorrectly charged L-seryl-tRNA(Thr). This Pseudomonas putida (strain W619) protein is Threonine--tRNA ligase.